A 509-amino-acid polypeptide reads, in one-letter code: tRNA-2-methylthio-N(6)-dimethylallyladenosine synthase (509 aa).

The interval 1–21 (MNEKQKLESGQVHPSDKKSEK) is disordered. Positions 66 to 184 (RKFYIRTYGC…LPELLSEAYL (119 aa)) constitute an MTTase N-terminal domain. 6 residues coordinate [4Fe-4S] cluster: cysteine 75, cysteine 111, cysteine 145, cysteine 221, cysteine 225, and cysteine 228. The Radical SAM core domain maps to 207–437 (RNGKIKGWVN…NALVNEISAK (231 aa)). Residues 440 to 503 (KEYEGKVVEV…TWSLDGEMVG (64 aa)) enclose the TRAM domain.

This sequence belongs to the methylthiotransferase family. MiaB subfamily. In terms of assembly, monomer. Requires [4Fe-4S] cluster as cofactor.

The protein localises to the cytoplasm. It catalyses the reaction N(6)-dimethylallyladenosine(37) in tRNA + (sulfur carrier)-SH + AH2 + 2 S-adenosyl-L-methionine = 2-methylsulfanyl-N(6)-dimethylallyladenosine(37) in tRNA + (sulfur carrier)-H + 5'-deoxyadenosine + L-methionine + A + S-adenosyl-L-homocysteine + 2 H(+). It carries out the reaction N(6)-dimethylallyladenosine(37) in tRNA + (sulfur carrier)-SH + AH2 + S-adenosyl-L-methionine = 2-thio-N(6)-dimethylallyladenosine(37) in tRNA + (sulfur carrier)-H + 5'-deoxyadenosine + L-methionine + A + H(+). The enzyme catalyses 2-thio-N(6)-dimethylallyladenosine(37) in tRNA + S-adenosyl-L-methionine = 2-methylsulfanyl-N(6)-dimethylallyladenosine(37) in tRNA + S-adenosyl-L-homocysteine + H(+). Functionally, catalyzes the methylthiolation of N6-(dimethylallyl)adenosine (i(6)A), leading to the formation of 2-methylthio-N6-(dimethylallyl)adenosine (ms(2)i(6)A) at position 37 in tRNAs that read codons beginning with uridine. In Bacillus subtilis (strain 168), this protein is tRNA-2-methylthio-N(6)-dimethylallyladenosine synthase.